The following is a 477-amino-acid chain: Splicing factor 3A subunit 2 (477 aa).

Met-1 bears the N-acetylmethionine mark. The interval 1–27 (MDFQHRPGGKTGSGGVASSSESNRDRR) is disordered. Lys-10 bears the N6-acetyllysine mark. The segment at 54–84 (YECKLCLTLHNNEGSYLAHTQGKKHQTNLAR) adopts a Matrin-type zinc-finger fold. Ser-153 carries the post-translational modification Phosphoserine. Composition is skewed to pro residues over residues 217-295 (PPAP…PVVH), 303-323 (PPAPGVHPPAPGVHPPAPVVH), and 331-362 (PPAPGVHPPAPGVHPPAPGVHPPAPGVHPPPS). Positions 217-477 (PPAPPSLPAG…GNIPPPPPTN (261 aa)) are disordered. Over residues 379-398 (VHPQAPGVHPTPAVHPQAPG) the composition is skewed to low complexity. 2 stretches are compositionally biased toward pro residues: residues 399–441 (VHPP…PPGV) and 448–477 (VHPPTPMPPMLRPPLPSEGPGNIPPPPPTN).

Belongs to the SF3A2 family. As to quaternary structure, component of the 17S U2 SnRNP complex, a ribonucleoprotein complex that contains small nuclear RNA (snRNA) U2 and a number of specific proteins. Part of the SF3A subcomplex of the 17S U2 SnRNP complex which is composed of three subunits; SF3A3/SAP61, SF3A2/SAP62 and SF3A1/SAP114. SF3A associates with the splicing factor SF3B and a 12S RNA unit to form the mature 17S U2 small nuclear ribonucleoprotein complex (17S U2 snRNP). Identified in the spliceosome 'E' complex, a precursor of the spliceosome 'A' complex. Identified in the spliceosome 'A' and 'B' complexes. Identified in the spliceosome 'C' complex. Interacts with HTATSF1.

The protein localises to the nucleus. Component of the 17S U2 SnRNP complex of the spliceosome, a large ribonucleoprotein complex that removes introns from transcribed pre-mRNAs. The 17S U2 SnRNP complex (1) directly participates in early spliceosome assembly and (2) mediates recognition of the intron branch site during pre-mRNA splicing by promoting the selection of the pre-mRNA branch-site adenosine, the nucleophile for the first step of splicing. Within the 17S U2 SnRNP complex, SF3A2 is part of the SF3A subcomplex that contributes to the assembly of the 17S U2 snRNP, and the subsequent assembly of the pre-spliceosome 'E' complex and the pre-catalytic spliceosome 'A' complex. Involved in pre-mRNA splicing as a component of pre-catalytic spliceosome 'B' complexes, including the Bact complex. Interacts directly with the duplex formed by U2 snRNA and the intron. The polypeptide is Splicing factor 3A subunit 2 (SF3A2) (Bos taurus (Bovine)).